The chain runs to 201 residues: Recombination protein RecR (201 aa).

The C4-type zinc-finger motif lies at 60–75 (CSRCFHFTDAEECSIC). The Toprim domain maps to 83–178 (GEICVVETTA…RVSRIAYGIP (96 aa)).

It belongs to the RecR family.

In terms of biological role, may play a role in DNA repair. It seems to be involved in an RecBC-independent recombinational process of DNA repair. It may act with RecF and RecO. The protein is Recombination protein RecR of Syntrophobacter fumaroxidans (strain DSM 10017 / MPOB).